A 122-amino-acid polypeptide reads, in one-letter code: Large ribosomal subunit protein bL12 (122 aa).

This sequence belongs to the bacterial ribosomal protein bL12 family. As to quaternary structure, homodimer. Part of the ribosomal stalk of the 50S ribosomal subunit. Forms a multimeric L10(L12)X complex, where L10 forms an elongated spine to which 2 to 4 L12 dimers bind in a sequential fashion. Binds GTP-bound translation factors.

Functionally, forms part of the ribosomal stalk which helps the ribosome interact with GTP-bound translation factors. Is thus essential for accurate translation. The polypeptide is Large ribosomal subunit protein bL12 (Staphylococcus epidermidis (strain ATCC 35984 / DSM 28319 / BCRC 17069 / CCUG 31568 / BM 3577 / RP62A)).